Consider the following 501-residue polypeptide: MITIFWIWGICLSVCCCLWLILGLRRRRMGEPPLEKGWIPYLGCALQFGANPLDFLRANQRKYGHVFTCKLMGKYVHFITNSLSYHKVLCHGKYFDWKKFHFTTSAKAFGHRSIDPRDGNTTENINNTFNKTLQGDALISLTDAMMENLQLTLRRPEPKSRAWVTEGMYSFCYRVMFEAGYLTLFGRELTRQDAQRAFILNSLEDFKQFDKVFPALVAGLPIHIFMTAHNAREKLAEGLKHDNLRTRDHISELIRLRMFLNDTLSTFDAMEKAKTHLAILWASQANTIPATFWSLFHMMRSSEALKAATEEVNKALEDADQQINFEGKPIHLNQTQLNDMPVLDSIIKESLRLSSASLNIRTAKEDFTLHLEDGSYNIRKDDIIALYPQLMHLDPEIYPDPMTFKYDRYLDENRKTKTTFYSKGLKLKYYYMPFGSGATICPGRLFAIQEIKQFLILMLSYFELEFVDSHVKCPPLDQSRAGLGILPPLNDIEFKYKFKHL.

A helical transmembrane segment spans residues 4 to 24; the sequence is IFWIWGICLSVCCCLWLILGL. Residue Cys-441 participates in heme binding.

The protein belongs to the cytochrome P450 family. The cofactor is heme. In terms of tissue distribution, detected in liver.

The protein resides in the endoplasmic reticulum membrane. Its subcellular location is the microsome membrane. The enzyme catalyses cholesterol + reduced [NADPH--hemoprotein reductase] + O2 = 7alpha-hydroxycholesterol + oxidized [NADPH--hemoprotein reductase] + H2O + H(+). The catalysed reaction is 4beta-hydroxycholesterol + reduced [NADPH--hemoprotein reductase] + O2 = 4beta,7alpha-dihydroxycholesterol + oxidized [NADPH--hemoprotein reductase] + H2O + H(+). It carries out the reaction lathosterol + reduced [NADPH--hemoprotein reductase] + O2 = 7alpha,8alpha-epoxy-5alpha-cholestan-3beta-ol + oxidized [NADPH--hemoprotein reductase] + H2O + H(+). It catalyses the reaction lathosterol + reduced [NADPH--hemoprotein reductase] + O2 = 5alpha-cholestan-7-oxo-3beta-ol + oxidized [NADPH--hemoprotein reductase] + H2O + H(+). The enzyme catalyses 7-dehydrocholesterol + reduced [NADPH--hemoprotein reductase] + O2 = 7-oxocholesterol + oxidized [NADPH--hemoprotein reductase] + H2O + H(+). The catalysed reaction is (24S)-hydroxycholesterol + reduced [NADPH--hemoprotein reductase] + O2 = (24S)-7alpha-dihydroxycholesterol + oxidized [NADPH--hemoprotein reductase] + H2O + H(+). It carries out the reaction (24R)-hydroxycholesterol + reduced [NADPH--hemoprotein reductase] + O2 = (24R)-7alpha-dihydroxycholesterol + oxidized [NADPH--hemoprotein reductase] + H2O + H(+). It functions in the pathway lipid metabolism; bile acid biosynthesis. Its pathway is steroid metabolism; cholesterol degradation. In terms of biological role, a cytochrome P450 monooxygenase involved in the metabolism of endogenous cholesterol and its oxygenated derivatives (oxysterols). Mechanistically, uses molecular oxygen inserting one oxygen atom into a substrate, and reducing the second into a water molecule, with two electrons provided by NADPH via cytochrome P450 reductase (CPR; NADPH-ferrihemoprotein reductase). Functions as a critical regulatory enzyme of bile acid biosynthesis and cholesterol homeostasis. Catalyzes the hydroxylation of carbon hydrogen bond at 7-alpha position of cholesterol, a rate-limiting step in cholesterol catabolism and bile acid biosynthesis. 7-alpha hydroxylates several oxysterols, including 4beta-hydroxycholesterol and 24-hydroxycholesterol. Catalyzes the oxidation of the 7,8 double bond of 7-dehydrocholesterol and lathosterol with direct and predominant formation of the 7-keto derivatives. The polypeptide is Cytochrome P450 7A1 (CYP7A1) (Oryctolagus cuniculus (Rabbit)).